A 138-amino-acid polypeptide reads, in one-letter code: ATP synthase epsilon chain (138 aa).

It belongs to the ATPase epsilon chain family. In terms of assembly, F-type ATPases have 2 components, CF(1) - the catalytic core - and CF(0) - the membrane proton channel. CF(1) has five subunits: alpha(3), beta(3), gamma(1), delta(1), epsilon(1). CF(0) has three main subunits: a, b and c.

Its subcellular location is the cell inner membrane. Produces ATP from ADP in the presence of a proton gradient across the membrane. The polypeptide is ATP synthase epsilon chain (Blochmanniella floridana).